The primary structure comprises 524 residues: Probable 1,3-beta-glucanosyltransferase GAS3 (524 aa).

The signal sequence occupies residues methionine 1–alanine 21. A disulfide bridge links cysteine 78 with cysteine 107. (1,3-beta-D-glucosyl)n contacts are provided by tyrosine 96, asparagine 168, and glutamate 169. Glutamate 169 functions as the Proton donor in the catalytic mechanism. An N-linked (GlcNAc...) asparagine glycan is attached at asparagine 201. Positions 212 and 217 each coordinate (1,3-beta-D-glucosyl)n. Intrachain disulfides connect cysteine 226/cysteine 369 and cysteine 254/cysteine 286. Asparagine 269 is a glycosylation site (N-linked (GlcNAc...) asparagine). Glutamate 283 functions as the Nucleophile in the catalytic mechanism. Tyrosine 315 lines the (1,3-beta-D-glucosyl)n pocket. N-linked (GlcNAc...) asparagine glycosylation is found at asparagine 350, asparagine 385, asparagine 404, and asparagine 422. The disordered stretch occupies residues threonine 461–glycine 498. Glycine 498 is lipidated: GPI-anchor amidated glycine. A propeptide spans valine 499 to leucine 524 (removed in mature form).

The protein belongs to the glycosyl hydrolase 72 family. Post-translationally, the GPI-anchor is attached to the protein in the endoplasmic reticulum and serves to target the protein to the cell surface. There, the glucosamine-inositol phospholipid moiety is cleaved off and the GPI-modified mannoprotein is covalently attached via its lipidless GPI glycan remnant to the 1,6-beta-glucan of the outer cell wall layer. In terms of processing, N-glycosylated.

The protein localises to the secreted. The protein resides in the cell wall. It localises to the membrane. Splits internally a 1,3-beta-glucan molecule and transfers the newly generated reducing end (the donor) to the non-reducing end of another 1,3-beta-glucan molecule (the acceptor) forming a 1,3-beta linkage, resulting in the elongation of 1,3-beta-glucan chains in the cell wall. Involved in cell wall biosynthesis and morphogenesis. The polypeptide is Probable 1,3-beta-glucanosyltransferase GAS3 (GAS3) (Saccharomyces cerevisiae (strain ATCC 204508 / S288c) (Baker's yeast)).